Reading from the N-terminus, the 69-residue chain is uncharacterized protein (69 aa).

4Fe-4S ferredoxin-type domains are found at residues 2–30 and 38–67; these read KIEI…KSKK and PPIP…IELS. [4Fe-4S] cluster is bound by residues Cys-10, Cys-13, Cys-16, Cys-20, Cys-47, Cys-50, Cys-53, and Cys-57.

Requires [4Fe-4S] cluster as cofactor.

This is an uncharacterized protein from Methanocaldococcus jannaschii (strain ATCC 43067 / DSM 2661 / JAL-1 / JCM 10045 / NBRC 100440) (Methanococcus jannaschii).